A 206-amino-acid chain; its full sequence is Large ribosomal subunit protein uL13w (206 aa).

The protein belongs to the universal ribosomal protein uL13 family.

The chain is Large ribosomal subunit protein uL13w (RPL13AD) from Arabidopsis thaliana (Mouse-ear cress).